A 2596-amino-acid chain; its full sequence is Protein unc-79 homolog (2596 aa).

A phosphoserine mark is found at S754 and S758. Disordered regions lie at residues 907–931 (GPEGEEEENPAAKHGENPGNRTVPS), 1539–1573 (SQRQNDHHGRSRQNSATRPDNTEIPKNPGTEGFQE), 1594–1632 (VDSPGKPAPREDLDLIDLSSDSTSGPEKHSILSTSDSDS), 1648–1679 (EEEEMMNQGNGGALGNNAASSPSIPSQPSVLS), 1695–1832 (KDFS…FKIQ), and 1863–1909 (LGEQ…KQIQ). Residues 1594–1606 (VDSPGKPAPREDL) are compositionally biased toward basic and acidic residues. Positions 1662-1679 (GNNAASSPSIPSQPSVLS) are enriched in low complexity. A compositionally biased stretch (polar residues) spans 1704–1713 (NHQSASNEDS). The span at 1726–1735 (ELSKSEELRE) shows a compositional bias: basic and acidic residues. A compositionally biased stretch (polar residues) spans 1897-1908 (ETSSHSSISKQI). Transmembrane regions (helical) follow at residues 2184–2204 (LLSFVIQNAVFTLAYLVELCG) and 2426–2446 (CVLHMCSLFHAFIFAQLWTVY).

It belongs to the unc-79 family. As to quaternary structure, NALCN complex consists of NALCN and auxiliary subunits, UNC79, UNC80 and NACL1. These auxiliary subunits are essential for the NALCN channel function. UNC80 bridges NALCN to UNC79. Interacts with NALCN. Interacts with UNC80.

It localises to the cell membrane. In terms of biological role, auxiliary subunit of the NALCN sodium channel complex. The NALCN sodium channel complex is a voltage-gated ion channel responsible for the resting Na(+) permeability that controls neuronal excitability. Activated by neuropeptides substance P, neurotensin, and extracellular calcium that regulates neuronal excitability by controlling the sizes of NALCN-dependent sodium-leak current. This Mus musculus (Mouse) protein is Protein unc-79 homolog (Unc79).